The primary structure comprises 209 residues: Large ribosomal subunit protein uL3 (209 aa).

Position 150 is an N5-methylglutamine (Q150).

Belongs to the universal ribosomal protein uL3 family. In terms of assembly, part of the 50S ribosomal subunit. Forms a cluster with proteins L14 and L19. Methylated by PrmB.

Functionally, one of the primary rRNA binding proteins, it binds directly near the 3'-end of the 23S rRNA, where it nucleates assembly of the 50S subunit. In Ectopseudomonas mendocina (strain ymp) (Pseudomonas mendocina), this protein is Large ribosomal subunit protein uL3.